Reading from the N-terminus, the 48-residue chain is Large ribosomal subunit protein bL33A (48 aa).

It belongs to the bacterial ribosomal protein bL33 family.

This Shouchella clausii (strain KSM-K16) (Alkalihalobacillus clausii) protein is Large ribosomal subunit protein bL33A.